The chain runs to 213 residues: MEFLLDSANPEEIRQAWAMGVIGGITTNPSLVAKEGRDFHQLLQELVQIVNGPISAEVIALDTEGMLGEARELAAMHPNIVVKIPMTEEGLKAVKVLKAEGIKTNVTLVFSAVQALLAARAGATYVSPFLGRLDDIGENGLLLLADICEVFGVHGLETKVIAASIRNPVHVTEAAKIGADYATVPFNVLCQLFKHPLTEAGIKKFLADWQKLK.

Residue lysine 83 is the Schiff-base intermediate with substrate of the active site.

The protein belongs to the transaldolase family. Type 3B subfamily.

It localises to the cytoplasm. The catalysed reaction is D-sedoheptulose 7-phosphate + D-glyceraldehyde 3-phosphate = D-erythrose 4-phosphate + beta-D-fructose 6-phosphate. It participates in carbohydrate degradation; pentose phosphate pathway; D-glyceraldehyde 3-phosphate and beta-D-fructose 6-phosphate from D-ribose 5-phosphate and D-xylulose 5-phosphate (non-oxidative stage): step 2/3. Transaldolase is important for the balance of metabolites in the pentose-phosphate pathway. This Desulfitobacterium hafniense (strain DSM 10664 / DCB-2) protein is Probable transaldolase.